A 101-amino-acid polypeptide reads, in one-letter code: Large ribosomal subunit protein uL23 (101 aa).

This sequence belongs to the universal ribosomal protein uL23 family. In terms of assembly, part of the 50S ribosomal subunit. Contacts protein L29, and trigger factor when it is bound to the ribosome.

Its function is as follows. One of the early assembly proteins it binds 23S rRNA. One of the proteins that surrounds the polypeptide exit tunnel on the outside of the ribosome. Forms the main docking site for trigger factor binding to the ribosome. This Haemophilus ducreyi (strain 35000HP / ATCC 700724) protein is Large ribosomal subunit protein uL23.